A 213-amino-acid chain; its full sequence is UPF0329 protein ECU04_0110 (213 aa).

Belongs to the UPF0329 family.

This chain is UPF0329 protein ECU04_0110, found in Encephalitozoon cuniculi (strain GB-M1) (Microsporidian parasite).